Here is a 190-residue protein sequence, read N- to C-terminus: Putative triphosphatase YjbK (190 aa).

Residues 4-189 (EIEIEFKNML…LRFYEEKRKS (186 aa)) form the CYTH domain.

The protein is Putative triphosphatase YjbK (yjbK) of Bacillus subtilis (strain 168).